The chain runs to 449 residues: Exodeoxyribonuclease 7 large subunit (449 aa).

This sequence belongs to the XseA family. As to quaternary structure, heterooligomer composed of large and small subunits.

It is found in the cytoplasm. It carries out the reaction Exonucleolytic cleavage in either 5'- to 3'- or 3'- to 5'-direction to yield nucleoside 5'-phosphates.. Bidirectionally degrades single-stranded DNA into large acid-insoluble oligonucleotides, which are then degraded further into small acid-soluble oligonucleotides. The chain is Exodeoxyribonuclease 7 large subunit from Lacticaseibacillus casei (strain BL23) (Lactobacillus casei).